Consider the following 316-residue polypeptide: Methionyl-tRNA formyltransferase (316 aa).

111-114 (GLLP) contributes to the (6S)-5,6,7,8-tetrahydrofolate binding site.

The protein belongs to the Fmt family.

The enzyme catalyses L-methionyl-tRNA(fMet) + (6R)-10-formyltetrahydrofolate = N-formyl-L-methionyl-tRNA(fMet) + (6S)-5,6,7,8-tetrahydrofolate + H(+). Attaches a formyl group to the free amino group of methionyl-tRNA(fMet). The formyl group appears to play a dual role in the initiator identity of N-formylmethionyl-tRNA by promoting its recognition by IF2 and preventing the misappropriation of this tRNA by the elongation apparatus. This is Methionyl-tRNA formyltransferase from Chlamydia trachomatis serovar A (strain ATCC VR-571B / DSM 19440 / HAR-13).